Consider the following 278-residue polypeptide: Small ribosomal subunit protein uS2 (278 aa).

Residue serine 2 is modified to N-acetylserine. Residues 258 to 278 (TNEGKTAADEWATGAQTQSNW) form a disordered region.

Belongs to the universal ribosomal protein uS2 family. Component of the small ribosomal subunit. Mature ribosomes consist of a small (40S) and a large (60S) subunit. The 40S subunit contains about 33 different proteins and 1 molecule of RNA (18S). The 60S subunit contains about 49 different proteins and 3 molecules of RNA (28S, 5.8S and 5S). Interacts with rps-21.

It localises to the cytoplasm. Functionally, required for the assembly and/or stability of the 40S ribosomal subunit. Required for the processing of the 20S rRNA-precursor to mature 18S rRNA in a late step of the maturation of 40S ribosomal subunits. The chain is Small ribosomal subunit protein uS2 from Caenorhabditis briggsae.